The sequence spans 383 residues: uncharacterized protein (383 aa).

Belongs to the peptidase M20 family.

This is an uncharacterized protein from Staphylococcus epidermidis (strain ATCC 12228 / FDA PCI 1200).